A 268-amino-acid chain; its full sequence is METMKAKELAQKILLDIYRNLDEFSKDIIRGDLADIEFKGFYLKGKNGEKAYIRNLDDFENLKDFDVEMRKYKLKSINLKNLDEGLMIINLSSRVSKEYKFEANEYSIIYPSNNTTIEFKERVLKWMELEDDELDEKIIEFDTKMNEILEELLEDVEVEEEISVYIDVFMDVNKIENFVEKDDERIIIWIHPVFLFSNDDVLRGLLAYELSRFKSRFLEVGYKDIIKYCRELKKLTNKKPKVLEKIKDIANKYGDIDSLNLINEIENE.

A coiled-coil region spans residues 132-159 (DELDEKIIEFDTKMNEILEELLEDVEVE).

This is an uncharacterized protein from Methanocaldococcus jannaschii (strain ATCC 43067 / DSM 2661 / JAL-1 / JCM 10045 / NBRC 100440) (Methanococcus jannaschii).